The following is a 693-amino-acid chain: Zinc finger protein 441 (693 aa).

Residues 4–79 enclose the KRAB domain; it reads VAFEDVAINF…ERACEIKDNS (76 aa). The C2H2-type 1 zinc-finger motif lies at 169–190; that stretch reads YDCKECASFSSLENLQRHMAAH. Residues 196 to 218 form a C2H2-type 2; degenerate zinc finger; that stretch reads RICKLCGNAFIWPSLFHMLRRTH. A C2H2-type 3; degenerate zinc finger spans residues 224–246; the sequence is YEYEQCSTAFPAYSSTLRHERTH. The C2H2-type 4; degenerate zinc-finger motif lies at 252 to 274; the sequence is YQCKQCGKAFSCSCYTQLYERTH. C2H2-type zinc fingers lie at residues 280-302, 308-330, 336-358, 364-386, 392-413, 419-441, 447-469, 475-497, 503-525, 531-553, 559-581, 587-609, 615-637, 643-665, and 671-693; these read YECK…MIVH, HKCK…KRTH, YECK…MITH, HKCK…ETTH, YKCE…ETTH, YKCK…ERIH, YKCK…EKTH, YECK…MIMH, HKCK…ERIH, YKCK…ERTH, YGCQ…MITH, HKCK…ERTH, YECK…ERVH, and YKCK…EMTH.

It belongs to the krueppel C2H2-type zinc-finger protein family.

It localises to the nucleus. Its function is as follows. May be involved in transcriptional regulation. This is Zinc finger protein 441 (ZNF441) from Homo sapiens (Human).